The sequence spans 483 residues: Regulatory protein ViaA (483 aa).

The protein belongs to the ViaA family. As to quaternary structure, homodimer. Interacts with RavA.

Its subcellular location is the cytoplasm. In terms of biological role, component of the RavA-ViaA chaperone complex, which may act on the membrane to optimize the function of some of the respiratory chains. ViaA stimulates the ATPase activity of RavA. The protein is Regulatory protein ViaA of Shigella sonnei (strain Ss046).